Consider the following 164-residue polypeptide: FMN reductase (NADH) RutF (164 aa).

This sequence belongs to the non-flavoprotein flavin reductase family. RutF subfamily.

It catalyses the reaction FMNH2 + NAD(+) = FMN + NADH + 2 H(+). Functionally, catalyzes the reduction of FMN to FMNH2 which is used to reduce pyrimidine by RutA via the Rut pathway. In Enterobacter cloacae subsp. cloacae (strain ATCC 13047 / DSM 30054 / NBRC 13535 / NCTC 10005 / WDCM 00083 / NCDC 279-56), this protein is FMN reductase (NADH) RutF.